Here is a 436-residue protein sequence, read N- to C-terminus: GTPase Der (436 aa).

2 EngA-type G domains span residues 4–167 (PVVA…PKVE) and 176–351 (IRFC…ESHN). GTP-binding positions include 10-17 (GRPNVGKS), 57-61 (DTGGI), 119-122 (NKVD), 182-189 (GRPNVGKS), 229-233 (DTAGM), and 294-297 (NKWD). Residues 352–436 (IRVQTNVLND…PIRIIARARD (85 aa)) form the KH-like domain.

It belongs to the TRAFAC class TrmE-Era-EngA-EngB-Septin-like GTPase superfamily. EngA (Der) GTPase family. Associates with the 50S ribosomal subunit.

Functionally, GTPase that plays an essential role in the late steps of ribosome biogenesis. This chain is GTPase Der, found in Bacillus cytotoxicus (strain DSM 22905 / CIP 110041 / 391-98 / NVH 391-98).